We begin with the raw amino-acid sequence, 468 residues long: 6-phospho-beta-galactosidase (468 aa).

The D-galactose 6-phosphate site is built by Q19, H116, N159, E160, and N297. Catalysis depends on E160, which acts as the Proton donor. The active-site Nucleophile is the E375. The D-galactose 6-phosphate site is built by S428, W429, K435, and Y437.

Belongs to the glycosyl hydrolase 1 family.

The enzyme catalyses a 6-phospho-beta-D-galactoside + H2O = D-galactose 6-phosphate + an alcohol. It participates in carbohydrate metabolism; lactose degradation; D-galactose 6-phosphate and beta-D-glucose from lactose 6-phosphate: step 1/1. The chain is 6-phospho-beta-galactosidase from Streptococcus uberis (strain ATCC BAA-854 / 0140J).